Consider the following 348-residue polypeptide: Probable dual-specificity RNA methyltransferase RlmN (348 aa).

Residue Glu-92 is the Proton acceptor of the active site. In terms of domain architecture, Radical SAM core spans 98–331; the sequence is HPDRVTACIS…NEIRREKGTD (234 aa). The cysteines at positions 105 and 336 are disulfide-linked. [4Fe-4S] cluster contacts are provided by Cys-112, Cys-116, and Cys-119. S-adenosyl-L-methionine is bound by residues 159–160, Ser-191, 214–216, and Asn-290; these read GE and SLH. Cys-336 (S-methylcysteine intermediate) is an active-site residue.

Belongs to the radical SAM superfamily. RlmN family. [4Fe-4S] cluster is required as a cofactor.

It is found in the cytoplasm. The catalysed reaction is adenosine(2503) in 23S rRNA + 2 reduced [2Fe-2S]-[ferredoxin] + 2 S-adenosyl-L-methionine = 2-methyladenosine(2503) in 23S rRNA + 5'-deoxyadenosine + L-methionine + 2 oxidized [2Fe-2S]-[ferredoxin] + S-adenosyl-L-homocysteine. The enzyme catalyses adenosine(37) in tRNA + 2 reduced [2Fe-2S]-[ferredoxin] + 2 S-adenosyl-L-methionine = 2-methyladenosine(37) in tRNA + 5'-deoxyadenosine + L-methionine + 2 oxidized [2Fe-2S]-[ferredoxin] + S-adenosyl-L-homocysteine. Specifically methylates position 2 of adenine 2503 in 23S rRNA and position 2 of adenine 37 in tRNAs. The polypeptide is Probable dual-specificity RNA methyltransferase RlmN (Fervidobacterium nodosum (strain ATCC 35602 / DSM 5306 / Rt17-B1)).